The chain runs to 231 residues: tRNA (guanine-N(1)-)-methyltransferase (231 aa).

Residues G112 and 132 to 137 (LGDFVL) each bind S-adenosyl-L-methionine.

Belongs to the RNA methyltransferase TrmD family. Homodimer.

It is found in the cytoplasm. The catalysed reaction is guanosine(37) in tRNA + S-adenosyl-L-methionine = N(1)-methylguanosine(37) in tRNA + S-adenosyl-L-homocysteine + H(+). Its function is as follows. Specifically methylates guanosine-37 in various tRNAs. This Microcystis aeruginosa (strain NIES-843 / IAM M-2473) protein is tRNA (guanine-N(1)-)-methyltransferase.